Consider the following 67-residue polypeptide: Probable Sec-independent protein translocase protein TatE (67 aa).

The chain crosses the membrane as a helical span at residues Ile4 to Gly21.

This sequence belongs to the TatA/E family. TatE subfamily.

It localises to the cell inner membrane. Part of the twin-arginine translocation (Tat) system that transports large folded proteins containing a characteristic twin-arginine motif in their signal peptide across membranes. TatE shares overlapping functions with TatA. The polypeptide is Probable Sec-independent protein translocase protein TatE (Salmonella arizonae (strain ATCC BAA-731 / CDC346-86 / RSK2980)).